The sequence spans 419 residues: MDKLLIKASKPLQGSVRISGAKNAALPILMSSILADTTCYFDNVPELRDINTSLALLAELGADAKRVSGHAVEIDPSSINNCNASYDLVKTMRASILVLGPLLAKYGEANVSLPGGCAIGARPVNLHLQGLEKMGAKIDVEAGYIRAKVDGRLKGANIFMDMVSVGATENLMMAACLADGETVLENAAREPEIVDLANCLNAMGAKVTHAGSDKIRIQGVERLQGCRYAVLPDRIETGTFLIAAAVTGGKIRCENAAPETLDAVLDKLVMAGAVITTGDDWIELDMQGHPLTSVNIKTAPHPGFPTDMQAQFVALNCVAQGTGVVTENIFENRFMHVPELQRMGAKIDLETNSAVCHGVSSLKGAQVMATDLRASASLVIAGLVAEGETVVDRIYHLDRGYEHIETKLNGLGANIQRIK.

22–23 (KN) contacts phosphoenolpyruvate. A UDP-N-acetyl-alpha-D-glucosamine-binding site is contributed by Arg93. The active-site Proton donor is the Cys117. The residue at position 117 (Cys117) is a 2-(S-cysteinyl)pyruvic acid O-phosphothioketal. UDP-N-acetyl-alpha-D-glucosamine is bound by residues Asp307 and Ile329.

The protein belongs to the EPSP synthase family. MurA subfamily.

The protein localises to the cytoplasm. It carries out the reaction phosphoenolpyruvate + UDP-N-acetyl-alpha-D-glucosamine = UDP-N-acetyl-3-O-(1-carboxyvinyl)-alpha-D-glucosamine + phosphate. It participates in cell wall biogenesis; peptidoglycan biosynthesis. In terms of biological role, cell wall formation. Adds enolpyruvyl to UDP-N-acetylglucosamine. The sequence is that of UDP-N-acetylglucosamine 1-carboxyvinyltransferase from Pseudoalteromonas atlantica (strain T6c / ATCC BAA-1087).